The sequence spans 201 residues: 3-isopropylmalate dehydratase small subunit (201 aa).

This sequence belongs to the LeuD family. LeuD type 1 subfamily. In terms of assembly, heterodimer of LeuC and LeuD.

The catalysed reaction is (2R,3S)-3-isopropylmalate = (2S)-2-isopropylmalate. It functions in the pathway amino-acid biosynthesis; L-leucine biosynthesis; L-leucine from 3-methyl-2-oxobutanoate: step 2/4. Its function is as follows. Catalyzes the isomerization between 2-isopropylmalate and 3-isopropylmalate, via the formation of 2-isopropylmaleate. This chain is 3-isopropylmalate dehydratase small subunit, found in Methylorubrum extorquens (strain ATCC 14718 / DSM 1338 / JCM 2805 / NCIMB 9133 / AM1) (Methylobacterium extorquens).